A 695-amino-acid chain; its full sequence is HIPL1 protein (695 aa).

The N-terminal stretch at 1-23 (MKLHQFLVFLFLFLSCFALSSWA) is a signal peptide. N-linked (GlcNAc...) asparagine glycans are attached at residues N37, N67, N107, N113, N128, N151, N175, N190, N208, N337, N429, N511, N527, N641, and N648. Residue S665 is the site of GPI-anchor amidated serine attachment. A propeptide spans 666-695 (SSCYKHINGFHGSLVVLFVSLSLILLGLLN) (removed in mature form).

It belongs to the PQQ oxidoreductase GdhB family. Pyrroloquinoline quinone is required as a cofactor.

The protein resides in the cell membrane. This is HIPL1 protein (HIPL1) from Arabidopsis thaliana (Mouse-ear cress).